The chain runs to 501 residues: Glycerol kinase (501 aa).

Position 17 (Thr-17) interacts with ADP. 3 residues coordinate ATP: Thr-17, Thr-18, and Ser-19. Residue Thr-17 participates in sn-glycerol 3-phosphate binding. Residue Arg-21 coordinates ADP. Sn-glycerol 3-phosphate-binding residues include Arg-87, Glu-88, Tyr-139, and Asp-243. Glycerol contacts are provided by Arg-87, Glu-88, Tyr-139, Asp-243, and Gln-244. Residues Thr-265 and Gly-308 each coordinate ADP. Residues Thr-265, Gly-308, Gln-312, and Gly-409 each contribute to the ATP site. Residues Gly-409 and Asn-413 each coordinate ADP.

It belongs to the FGGY kinase family.

The enzyme catalyses glycerol + ATP = sn-glycerol 3-phosphate + ADP + H(+). The protein operates within polyol metabolism; glycerol degradation via glycerol kinase pathway; sn-glycerol 3-phosphate from glycerol: step 1/1. Its activity is regulated as follows. Inhibited by fructose 1,6-bisphosphate (FBP). In terms of biological role, key enzyme in the regulation of glycerol uptake and metabolism. Catalyzes the phosphorylation of glycerol to yield sn-glycerol 3-phosphate. In Pseudomonas savastanoi pv. phaseolicola (strain 1448A / Race 6) (Pseudomonas syringae pv. phaseolicola (strain 1448A / Race 6)), this protein is Glycerol kinase.